The primary structure comprises 396 residues: MTEHNIRNFAINFGPQHPAAHGVLRLVLELDGEVVERVDPHIGLLHRGTEKLIEYKTYLQATPYFDRLDYVSPMNQEHAFCLAIEKLAGIEVPRRAQLIRVLFCEIGRLLSHLLNVTTQAMDVGALTPPLWGFEEREKLMIFYERASGARLHANYFRPGGVHQDLPPKLIDDIDAFCDPFLQVVQDLDDLVMANRIFKQRNVDIGIVSVDEAMQWGFSGVMVRGSGIPWDLRKAQPYECYEEMEFDVPVGKNGDTYDRQVIRMEEMRQSVRIMKQCVAKLREPAGQGPIASVDGKFAPPPRREMKRSMEALIHHFKLYTEGFHVPEGEVYAAVEAPKGEFGVYLVSDGTNKPYRCKIRAPGFAHLQAMDWMCRGHLLADVSCVLGTLDIVFGEVDR.

The protein belongs to the complex I 49 kDa subunit family. As to quaternary structure, NDH-1 is composed of 14 different subunits. Subunits NuoB, C, D, E, F, and G constitute the peripheral sector of the complex.

It localises to the cell inner membrane. The enzyme catalyses a quinone + NADH + 5 H(+)(in) = a quinol + NAD(+) + 4 H(+)(out). NDH-1 shuttles electrons from NADH, via FMN and iron-sulfur (Fe-S) centers, to quinones in the respiratory chain. The immediate electron acceptor for the enzyme in this species is believed to be ubiquinone. Couples the redox reaction to proton translocation (for every two electrons transferred, four hydrogen ions are translocated across the cytoplasmic membrane), and thus conserves the redox energy in a proton gradient. The protein is NADH-quinone oxidoreductase subunit D of Methylobacterium radiotolerans (strain ATCC 27329 / DSM 1819 / JCM 2831 / NBRC 15690 / NCIMB 10815 / 0-1).